A 93-amino-acid polypeptide reads, in one-letter code: Small ribosomal subunit protein uS19c (93 aa).

This sequence belongs to the universal ribosomal protein uS19 family.

The protein localises to the plastid. It is found in the chloroplast. In terms of biological role, protein S19 forms a complex with S13 that binds strongly to the 16S ribosomal RNA. This is Small ribosomal subunit protein uS19c from Oryza nivara (Indian wild rice).